The chain runs to 109 residues: ATP-dependent Clp protease adapter protein ClpS 2 (109 aa).

Residues 1-24 (MAGDGGRSGPSTPSTSVITKTKPR) form a disordered region.

The protein belongs to the ClpS family. In terms of assembly, binds to the N-terminal domain of the chaperone ClpA.

Its function is as follows. Involved in the modulation of the specificity of the ClpAP-mediated ATP-dependent protein degradation. The chain is ATP-dependent Clp protease adapter protein ClpS 2 from Rhodopseudomonas palustris (strain ATCC BAA-98 / CGA009).